Reading from the N-terminus, the 415-residue chain is 3-isopropylmalate dehydratase large subunit (415 aa).

Positions 297, 355, and 358 each coordinate [4Fe-4S] cluster.

It belongs to the aconitase/IPM isomerase family. LeuC type 2 subfamily. As to quaternary structure, heterodimer of LeuC and LeuD. It depends on [4Fe-4S] cluster as a cofactor.

It carries out the reaction (2R,3S)-3-isopropylmalate = (2S)-2-isopropylmalate. The protein operates within amino-acid biosynthesis; L-leucine biosynthesis; L-leucine from 3-methyl-2-oxobutanoate: step 2/4. Its function is as follows. Catalyzes the isomerization between 2-isopropylmalate and 3-isopropylmalate, via the formation of 2-isopropylmaleate. In Sulfurisphaera tokodaii (strain DSM 16993 / JCM 10545 / NBRC 100140 / 7) (Sulfolobus tokodaii), this protein is 3-isopropylmalate dehydratase large subunit.